The following is a 173-amino-acid chain: C-phycocyanin-3 beta subunit (173 aa).

N4-methylasparagine is present on N73. 2 residues coordinate (2R,3E)-phycocyanobilin: C83 and C154.

This sequence belongs to the phycobiliprotein family. As to quaternary structure, heterodimer of an alpha and a beta subunit, which further assembles into trimers and the trimers into hexamers. Post-translationally, contains two covalently linked bilin chromophores.

The protein resides in the cellular thylakoid membrane. Light-harvesting photosynthetic bile pigment-protein from the phycobiliprotein complex (phycobilisome, PBS). Phycocyanin is the major phycobiliprotein in the PBS rod. The chain is C-phycocyanin-3 beta subunit (cpcB3) from Microchaete diplosiphon (Fremyella diplosiphon).